A 502-amino-acid polypeptide reads, in one-letter code: Protein adenylyltransferase Fic (502 aa).

A disordered region spans residues 1-24 (MAMATGKATEEEQPEQGQQQQQLQ). A compositionally biased stretch (low complexity) spans 15-24 (EQGQQQQQLQ). The helical transmembrane segment at 38 to 60 (FALFFIAGCLAAFGFHALTSSSG) threads the bilayer. TPR repeat units lie at residues 122–155 (AMGA…APKH) and 156–190 (PEVL…NPSN). The Inhibitory (S/T)XXXE(G/N) motif signature appears at 247–252 (SVGIEG). ATP-binding positions include glutamate 251 and 332–335 (VGGH). The Fido domain maps to 301 to 436 (ITLKDILELH…IRPFVRFIAD (136 aa)). Residue histidine 379 is part of the active site. ATP is bound by residues 383–390 (DGNGRTSR), 415–416 (YY), and asparagine 423. Residues 478 to 502 (SPELYESGSGSGAGAGAGSGQKGMP) are disordered. Over residues 486–502 (SGSGAGAGAGSGQKGMP) the composition is skewed to gly residues.

This sequence belongs to the fic family. In terms of assembly, homodimer.

It is found in the membrane. It carries out the reaction L-tyrosyl-[protein] + ATP = O-(5'-adenylyl)-L-tyrosyl-[protein] + diphosphate. The enzyme catalyses L-threonyl-[protein] + ATP = 3-O-(5'-adenylyl)-L-threonyl-[protein] + diphosphate. It catalyses the reaction 3-O-(5'-adenylyl)-L-threonyl-[protein] + H2O = L-threonyl-[protein] + AMP + H(+). With respect to regulation, the side chain of Glu-251 determines which of the two opposing activities (AMPylase or de-AMPylase) will take place. In response to endoplasmic reticulum stress, mediates de-AMPylase activity. Adenylyltransferase activity is inhibited by the inhibitory helix present at the N-terminus: Glu-251 binds ATP and competes with ATP-binding at Arg-390, thereby preventing adenylyltransferase activity. In unstressed cells, disengagement of Glu-251 promotes adenylyltransferase activity. Activation dissociates ATP-binding from Glu-251, allowing ordered binding of the entire ATP moiety with the alpha-phosphate in an orientation that is productive for accepting an incoming target hydroxyl side chain. In terms of biological role, protein that can both mediate the addition of adenosine 5'-monophosphate (AMP) to specific residues of target proteins (AMPylation), and the removal of the same modification from target proteins (de-AMPylation), depending on the context. The side chain of Glu-251 determines which of the two opposing activities (AMPylase or de-AMPylase) will take place. Acts as a key regulator of the unfolded protein response (UPR) by mediating AMPylation or de-AMPylation of Hsc70-3/BiP. In unstressed cells, acts as an adenylyltransferase by mediating AMPylation of Hsc70-3/BiP at 'Thr-518', thereby inactivating it. In response to endoplasmic reticulum stress, acts as a phosphodiesterase by mediating removal of ATP (de-AMPylation) from Hsc70-3/BiP at 'Thr-518', leading to restore HSPA5/BiP activity. The chain is Protein adenylyltransferase Fic from Drosophila mojavensis (Fruit fly).